A 443-amino-acid chain; its full sequence is Ribosomal protein uS12 methylthiotransferase RimO (443 aa).

In terms of domain architecture, MTTase N-terminal spans 10 to 120 (PRVGFVSLGC…VMAAVHAQCP (111 aa)). [4Fe-4S] cluster-binding residues include C19, C55, C84, C152, C156, and C159. The 238-residue stretch at 138–375 (LTPRHYAYLK…MALQAEISAR (238 aa)) folds into the Radical SAM core domain. Residues 378 to 443 (ARRVGTECTV…DEHDLYGRVL (66 aa)) enclose the TRAM domain.

The protein belongs to the methylthiotransferase family. RimO subfamily. [4Fe-4S] cluster serves as cofactor.

The protein resides in the cytoplasm. The enzyme catalyses L-aspartate(89)-[ribosomal protein uS12]-hydrogen + (sulfur carrier)-SH + AH2 + 2 S-adenosyl-L-methionine = 3-methylsulfanyl-L-aspartate(89)-[ribosomal protein uS12]-hydrogen + (sulfur carrier)-H + 5'-deoxyadenosine + L-methionine + A + S-adenosyl-L-homocysteine + 2 H(+). Its function is as follows. Catalyzes the methylthiolation of an aspartic acid residue of ribosomal protein uS12. The polypeptide is Ribosomal protein uS12 methylthiotransferase RimO (Alkalilimnicola ehrlichii (strain ATCC BAA-1101 / DSM 17681 / MLHE-1)).